An 85-amino-acid polypeptide reads, in one-letter code: Sec-independent protein translocase protein TatA (85 aa).

Residues methionine 1–glycine 21 form a helical membrane-spanning segment. The span at phenylalanine 39–proline 51 shows a compositional bias: basic and acidic residues. Residues phenylalanine 39–glycine 85 are disordered. The segment covering alanine 52–proline 65 has biased composition (low complexity). The segment covering arginine 66 to glycine 85 has biased composition (basic and acidic residues).

This sequence belongs to the TatA/E family. As to quaternary structure, the Tat system comprises two distinct complexes: a TatABC complex, containing multiple copies of TatA, TatB and TatC subunits, and a separate TatA complex, containing only TatA subunits. Substrates initially bind to the TatABC complex, which probably triggers association of the separate TatA complex to form the active translocon.

It localises to the cell inner membrane. Functionally, part of the twin-arginine translocation (Tat) system that transports large folded proteins containing a characteristic twin-arginine motif in their signal peptide across membranes. TatA could form the protein-conducting channel of the Tat system. The sequence is that of Sec-independent protein translocase protein TatA from Ralstonia nicotianae (strain ATCC BAA-1114 / GMI1000) (Ralstonia solanacearum).